We begin with the raw amino-acid sequence, 82 residues long: Sec-independent protein translocase protein TatA (82 aa).

Residues Met1–Gly21 traverse the membrane as a helical segment. Residues Gly46–Ser82 are disordered. The span at Thr49–Asp70 shows a compositional bias: polar residues. Basic and acidic residues predominate over residues Thr72–Ser82.

The protein belongs to the TatA/E family. In terms of assembly, the Tat system comprises two distinct complexes: a TatABC complex, containing multiple copies of TatA, TatB and TatC subunits, and a separate TatA complex, containing only TatA subunits. Substrates initially bind to the TatABC complex, which probably triggers association of the separate TatA complex to form the active translocon.

The protein localises to the cell inner membrane. Functionally, part of the twin-arginine translocation (Tat) system that transports large folded proteins containing a characteristic twin-arginine motif in their signal peptide across membranes. TatA could form the protein-conducting channel of the Tat system. This chain is Sec-independent protein translocase protein TatA, found in Acidovorax sp. (strain JS42).